The primary structure comprises 170 residues: VIP peptides (170 aa).

A signal peptide spans 1 to 20 (MDTRNKAQLLVLLTLLSVLF). Residues 21 to 79 (SQTSAWPLYRAPSALRLGDRIPFEGANEPDQVSLKEDIDMLQNALAENDTPYYDVSRNA) constitute a propeptide that is removed on maturation. A Phosphoserine modification is found at serine 76. The residue at position 107 (methionine 107) is a Methionine amide. The residue at position 152 (asparagine 152) is an Asparagine amide. A propeptide spanning residues 156 to 170 (SSEGESPDFPEELEK) is cleaved from the precursor.

The protein belongs to the glucagon family.

It is found in the secreted. VIP is a neuropeptide involved in a diverse array of physiological processes through activating the PACAP subfamily of class B1 G protein-coupled receptors: VIP receptor 1 (VPR1) and VIP receptor 2 (VPR2). Abundantly expressed throughout the CNS and peripheral nervous systems where they primarily exert neuroprotective and immune modulatory roles. Also causes vasodilation, lowers arterial blood pressure, stimulates myocardial contractility, increases glycogenolysis and relaxes the smooth muscle of trachea, stomach and gall bladder. Functionally, PHM-27 and PHV-42 are two bioactive forms from proteolysis of the same precursor protein, that cause vasodilation. PHM-27 is a potent agonist of the calcitonin receptor CALCR, with similar efficacy as calcitonin. The polypeptide is VIP peptides (Homo sapiens (Human)).